The primary structure comprises 125 residues: uncharacterized protein (125 aa).

Helical transmembrane passes span 28 to 48 and 54 to 74; these read VFIT…SQFC and FFLP…LFFF.

It localises to the membrane. This is an uncharacterized protein from Saccharomyces cerevisiae (strain ATCC 204508 / S288c) (Baker's yeast).